Reading from the N-terminus, the 491-residue chain is Cobyric acid synthase (491 aa).

The region spanning 250–439 is the GATase cobBQ-type domain; that stretch reads EVTIAVIRLP…LHGIFDNGAW (190 aa). Residue cysteine 331 is the Nucleophile of the active site. Residue histidine 431 is part of the active site.

Belongs to the CobB/CobQ family. CobQ subfamily.

It functions in the pathway cofactor biosynthesis; adenosylcobalamin biosynthesis. Its function is as follows. Catalyzes amidations at positions B, D, E, and G on adenosylcobyrinic A,C-diamide. NH(2) groups are provided by glutamine, and one molecule of ATP is hydrogenolyzed for each amidation. The chain is Cobyric acid synthase from Synechococcus elongatus (strain ATCC 33912 / PCC 7942 / FACHB-805) (Anacystis nidulans R2).